Consider the following 253-residue polypeptide: Triosephosphate isomerase (253 aa).

9-11 lines the substrate pocket; sequence NWK. Histidine 95 functions as the Electrophile in the catalytic mechanism. Catalysis depends on glutamate 167, which acts as the Proton acceptor. Substrate is bound by residues glycine 173, serine 213, and 234–235; that span reads GG. Residue serine 213 is modified to Phosphoserine.

Belongs to the triosephosphate isomerase family. As to quaternary structure, homodimer.

It is found in the cytoplasm. The catalysed reaction is D-glyceraldehyde 3-phosphate = dihydroxyacetone phosphate. It participates in carbohydrate biosynthesis; gluconeogenesis. Its pathway is carbohydrate degradation; glycolysis; D-glyceraldehyde 3-phosphate from glycerone phosphate: step 1/1. Involved in the gluconeogenesis. Catalyzes stereospecifically the conversion of dihydroxyacetone phosphate (DHAP) to D-glyceraldehyde-3-phosphate (G3P). This is Triosephosphate isomerase from Geobacillus thermodenitrificans (strain NG80-2).